We begin with the raw amino-acid sequence, 1781 residues long: BCL-6 corepressor-like protein 1 (1781 aa).

Disordered stretches follow at residues 64–136 (AVGS…SHSR) and 337–362 (ASTPPAAPAPPSVPMPTPTPSSGPPS). Polar residues-rich tracts occupy residues 66-82 (GSGSNARGTNPDGNTTE) and 127-136 (PDSTEASHSR). Residue serine 490 is modified to Phosphoserine. Low complexity predominate over residues 521–531 (SCTSPSSSTNS). Disordered regions lie at residues 521-545 (SCTSPSSSTNSQPAPDGVPGPLADT), 561-616 (LLPA…EMPL), 733-777 (NRDP…STVK), 869-895 (PLGSSETVHGLPEGQPRPGGPFAPEQD), and 933-960 (QPSSGDMGVNQGSEESESHLCSDSTPKM). Residues 581 to 594 (TDQQTEGTSVTFSP) are compositionally biased toward polar residues. Residues serine 593 and serine 607 each carry the phosphoserine modification. Lysine 741 is covalently cross-linked (Glycyl lysine isopeptide (Lys-Gly) (interchain with G-Cter in SUMO2)). The residue at position 1024 (serine 1024) is a Phosphoserine. Lysine 1087 is covalently cross-linked (Glycyl lysine isopeptide (Lys-Gly) (interchain with G-Cter in SUMO2)). The tract at residues 1100-1484 (WQPDEETESL…PTARQIPPEA (385 aa)) is disordered. Over residues 1116–1127 (CNKEKEIEEEPR) the composition is skewed to basic and acidic residues. Serine 1162 carries the phosphoserine modification. Basic residues predominate over residues 1176–1185 (VRGKHKHRKP). Residues 1195-1213 (KRTDGHEEGSLEKKAKNSF) are compositionally biased toward basic and acidic residues. Residues 1222–1234 (STRTRSQSGSICS) show a composition bias toward polar residues. 2 stretches are compositionally biased toward basic and acidic residues: residues 1271–1284 (TQRDTQYRSHHAQD) and 1297–1307 (RAREMPWRTEA). Residues 1314–1324 (TNEEEEDDEEE) show a composition bias toward acidic residues. Over residues 1328–1339 (KRKKRRRQKSRK) the composition is skewed to basic residues. The span at 1350–1362 (EEQRRKGRADSKA) shows a compositional bias: basic and acidic residues. Composition is skewed to polar residues over residues 1381–1394 (LLLSSKAQGISDSP) and 1437–1449 (RWSQQKTRSSKSP). ANK repeat units lie at residues 1493–1523 (AGETLLQRAARLGYKDVVLYCLQKHSEDVNH), 1527–1556 (AGYTALHEACSRGWTDILNILLQHGANVNC), and 1560–1589 (DGTRPVHDAVVNDNLETIWLLLSYGADPTL). A PCGF Ub-like fold domain (PUFD); required for the interaction with the KDM2B-SKP1 heterodimeric complex region spans residues 1664–1781 (DDFMFELSDK…SEVEYQSWSS (118 aa)).

It belongs to the BCOR family. In terms of assembly, interacts with PCGF1, forming heterodimers. The PCGF1-BCORL1 heterodimeric complex interacts with the KDM2B-SKP1 heterodimeric complex to form a homotetrameric polycomb repression complex 1 (PRC1.1). Interacts with SKP1. Interacts with CTBP1, HDAC4, HDAC5 and HDAC7. Highly expressed in lung and testis.

The protein resides in the nucleus. Its function is as follows. Transcriptional corepressor. May specifically inhibit gene expression when recruited to promoter regions by sequence specific DNA-binding proteins such as BCL6. This repression may be mediated at least in part by histone deacetylase activities which can associate with this corepressor. The protein is BCL-6 corepressor-like protein 1 (Bcorl1) of Mus musculus (Mouse).